We begin with the raw amino-acid sequence, 417 residues long: Serpin A9 (417 aa).

The signal sequence occupies residues 1-23; it reads MASYLYGVLFAVGLCAPIYCVSP. Residues Asn-101 and Asn-390 are each glycosylated (N-linked (GlcNAc...) asparagine).

It belongs to the serpin family. As to expression, highly expressed in normal germinal center (GC) B-cells and GC B-cell-derived malignancies.

The protein resides in the secreted. The protein localises to the cytoplasm. It localises to the membrane. Functionally, protease inhibitor that inhibits trypsin and trypsin-like serine proteases (in vitro). Inhibits plasmin and thrombin with lower efficiency (in vitro). This is Serpin A9 (SERPINA9) from Homo sapiens (Human).